Here is a 426-residue protein sequence, read N- to C-terminus: 3-phosphoshikimate 1-carboxyvinyltransferase (426 aa).

3 residues coordinate 3-phosphoshikimate: K22, S23, and R27. Phosphoenolpyruvate is bound at residue K22. Phosphoenolpyruvate-binding residues include G96 and R124. Positions 170, 171, 172, 198, 314, 337, and 341 each coordinate 3-phosphoshikimate. Q172 contacts phosphoenolpyruvate. The active-site Proton acceptor is the D314. 3 residues coordinate phosphoenolpyruvate: R345, R387, and K412.

This sequence belongs to the EPSP synthase family. Monomer.

The protein localises to the cytoplasm. The catalysed reaction is 3-phosphoshikimate + phosphoenolpyruvate = 5-O-(1-carboxyvinyl)-3-phosphoshikimate + phosphate. The protein operates within metabolic intermediate biosynthesis; chorismate biosynthesis; chorismate from D-erythrose 4-phosphate and phosphoenolpyruvate: step 6/7. Functionally, catalyzes the transfer of the enolpyruvyl moiety of phosphoenolpyruvate (PEP) to the 5-hydroxyl of shikimate-3-phosphate (S3P) to produce enolpyruvyl shikimate-3-phosphate and inorganic phosphate. This is 3-phosphoshikimate 1-carboxyvinyltransferase from Photobacterium damsela subsp. piscicida (Pasteurella piscicida).